The following is an 800-amino-acid chain: MLISNEWLKEYVTIDDSVSNLAERITRTGIEVDDLIDYTKDIKNLVVGFVKSKEKHPDADKLNVCQVDIGEDEPVQIVCGAPNVDAGQYVIVAKVGGRLPGGIKIKRAKLRGERSEGMICSLQEIGISSNYIPKSFESGIYVFSESQVPGTDALQALYLDDQVMEFDLTPNRADALSMIGTAYEVAALYNTKMTKPETTSNELELSANDELTVTIENEDKVPYYSARVVHNVTIEPSPIWMQARLIKAGIRPINNVVDISNYVLLEYGQPLHMFDQDAIGSQQIVVRQANEGEKMTTLDDTERELLTSDIVITNGQTPIALAGVMGGDFSEVKEHTSNIVIEGAIFDSVSIRHTSRRLNLRSESSSRFEKGIATEFVDEAVDRACYLLQTYANGKVLKDRVSSGELGAFITPIDITADKINRTIGFDLSQNDIVTIFNQLGFDTEINDDVITVQVPSRRKDITIKEDLIEEVARIYGYDDIPSTLPVFEKVTSGQLTDRQYKTRMVKEVLEGAGLDQAITYSLVSKEDATAFAMQQRQTIDLLMPMSEAHASLRQSLLPHLIEAASYNVARKNKDVKLFEIGNVFFANGEGELPDQVEYLSGILTGDYVVNQWQGKKETVDFYLAKGVVDRVSEKLNLEFSYRRADIDGLHPGRTAEILLENKVVGFIGELHPTLAADNDLKRTYVFELNFDALMAVSVGYINYQPIPIFPGMSRDIALEVDQNIPAADLLSTIHAHGGNILKDTLVFDVYQGEHLEKGKKSIAIRLNYLDTEETLTDERVSKVQAEIEAALIEQGAVIR.

Residues 39-154 (TKDIKNLVVG…ESQVPGTDAL (116 aa)) enclose the tRNA-binding domain. Positions 408 to 483 (AFITPIDITA…RIYGYDDIPS (76 aa)) constitute a B5 domain. The Mg(2+) site is built by Asp-461, Asp-467, Glu-470, and Glu-471. Positions 708 to 800 (PIFPGMSRDI…ALIEQGAVIR (93 aa)) constitute an FDX-ACB domain.

Belongs to the phenylalanyl-tRNA synthetase beta subunit family. Type 1 subfamily. In terms of assembly, tetramer of two alpha and two beta subunits. Mg(2+) is required as a cofactor.

It is found in the cytoplasm. It catalyses the reaction tRNA(Phe) + L-phenylalanine + ATP = L-phenylalanyl-tRNA(Phe) + AMP + diphosphate + H(+). The protein is Phenylalanine--tRNA ligase beta subunit of Staphylococcus aureus (strain bovine RF122 / ET3-1).